We begin with the raw amino-acid sequence, 490 residues long: Lysine--tRNA ligase (490 aa).

Residues Glu400 and Glu407 each contribute to the Mg(2+) site.

This sequence belongs to the class-II aminoacyl-tRNA synthetase family. Homodimer. The cofactor is Mg(2+).

It is found in the cytoplasm. It carries out the reaction tRNA(Lys) + L-lysine + ATP = L-lysyl-tRNA(Lys) + AMP + diphosphate. This chain is Lysine--tRNA ligase (lysS), found in Mycoplasma genitalium (strain ATCC 33530 / DSM 19775 / NCTC 10195 / G37) (Mycoplasmoides genitalium).